The chain runs to 308 residues: Ribosomal RNA small subunit methyltransferase H (308 aa).

S-adenosyl-L-methionine contacts are provided by residues 36-38, D55, F86, D103, and Q110; that span reads GGH.

Belongs to the methyltransferase superfamily. RsmH family.

Its subcellular location is the cytoplasm. The enzyme catalyses cytidine(1402) in 16S rRNA + S-adenosyl-L-methionine = N(4)-methylcytidine(1402) in 16S rRNA + S-adenosyl-L-homocysteine + H(+). Functionally, specifically methylates the N4 position of cytidine in position 1402 (C1402) of 16S rRNA. The polypeptide is Ribosomal RNA small subunit methyltransferase H (Helicobacter pylori (strain P12)).